We begin with the raw amino-acid sequence, 569 residues long: Peroxisomal targeting signal receptor (569 aa).

Residue Cys5 forms a Glycyl cysteine thioester (Cys-Gly) (interchain with G-Cter in ubiquitin) linkage. The interval 6 to 28 is amphipathic helix 1 (AH1); sequence SVGANPLAQLNKRVQQDRTLQHG. Residue Lys17 forms a Glycyl lysine isopeptide (Lys-Gly) (interchain with G-Cter in ubiquitin) linkage. An amphipathic helix 2 (AH2) region spans residues 53-71; that stretch reads KFQMEQFMAGKASSGGNMF. The WxxxF/Y motif 1 motif lies at 112–116; the sequence is WSQEF. Residues 150-154 are amphipathic helix 3 (AH3); that stretch reads PMNMM. The WxxxF/Y motif 2 signature appears at 181 to 185; sequence WEQQF. The interval 229-245 is amphipathic helix 4 (AH4); it reads FQQIWNDIHDQTDDLDS. 5 TPR repeats span residues 281–315, 316–349, 417–450, 452–484, and 486–518; these read NTDA…DPGH, VDAW…DPHN, PDVQ…RPDD, CMWN…KPTF, and RARY…HEVE.

Belongs to the peroxisomal targeting signal receptor family. In terms of assembly, interacts (via WxxxF/Y and LVxEF motifs) with PEX14; promoting translocation through the PEX13-PEX14 docking complex. In terms of processing, monoubiquitinated at Cys-5 by PEX2 during PEX5 passage through the retrotranslocation channel: monoubiquitination acts as a signal for PEX5 extraction and is required for proper export from peroxisomes and recycling. When PEX5 recycling is compromised, polyubiquitinated at Lys-17 by PEX10 during its passage through the retrotranslocation channel, leading to its degradation.

It localises to the cytoplasm. Its subcellular location is the cytosol. The protein resides in the peroxisome matrix. Its function is as follows. Receptor that mediates peroxisomal import of proteins containing a C-terminal PTS1-type tripeptide peroxisomal targeting signal (SKL-type). Binds to cargo proteins containing a PTS1 peroxisomal targeting signal in the cytosol, and translocates them into the peroxisome matrix by passing through the PEX13-PEX14 docking complex along with cargo proteins. PEX5 receptor is then retrotranslocated into the cytosol, leading to release of bound cargo in the peroxisome matrix, and reset for a subsequent peroxisome import cycle. The protein is Peroxisomal targeting signal receptor (PEX5) of Eremothecium gossypii (strain ATCC 10895 / CBS 109.51 / FGSC 9923 / NRRL Y-1056) (Yeast).